A 678-amino-acid polypeptide reads, in one-letter code: UvrABC system protein B (678 aa).

The region spanning 26–185 (EGLEDGEAFQ…LTTMQYTRND (160 aa)) is the Helicase ATP-binding domain. 39–46 (GVTGSGKT) serves as a coordination point for ATP. Residues 92-115 (YYDYYQPEAYVPASDTYIAKDSSV) carry the Beta-hairpin motif. Positions 430 to 596 (QVDDLLGEIR…KLNKKITDIL (167 aa)) constitute a Helicase C-terminal domain. The disordered stretch occupies residues 597–630 (EDSPYAPKPGASAAKLKAAEADGEYSPQEMQRMT). Positions 635–670 (ASEIKRMEKQMYQAAKDLDFELAAKLRDDLKRLKSS) constitute a UVR domain.

This sequence belongs to the UvrB family. Forms a heterotetramer with UvrA during the search for lesions. Interacts with UvrC in an incision complex.

The protein localises to the cytoplasm. The UvrABC repair system catalyzes the recognition and processing of DNA lesions. A damage recognition complex composed of 2 UvrA and 2 UvrB subunits scans DNA for abnormalities. Upon binding of the UvrA(2)B(2) complex to a putative damaged site, the DNA wraps around one UvrB monomer. DNA wrap is dependent on ATP binding by UvrB and probably causes local melting of the DNA helix, facilitating insertion of UvrB beta-hairpin between the DNA strands. Then UvrB probes one DNA strand for the presence of a lesion. If a lesion is found the UvrA subunits dissociate and the UvrB-DNA preincision complex is formed. This complex is subsequently bound by UvrC and the second UvrB is released. If no lesion is found, the DNA wraps around the other UvrB subunit that will check the other stand for damage. The polypeptide is UvrABC system protein B (Hydrogenovibrio crunogenus (strain DSM 25203 / XCL-2) (Thiomicrospira crunogena)).